The primary structure comprises 304 residues: QYHTLPEIYSWLDRLVQEHPEHVEPVVGGKSYEGREIRGVKVSYKKGNPVVMVESNIHAREWITAATTTYLLNELLTSKNSTIREMAENYDWYIFPVTNPDGYVYTHTTDRMWRKTRSPNPDSLCAGTDPNRNWNFHWMEQGTSSRPCTETYGGKKAFSEVETRSFSDFLKTLKGQIKVYLAFHSYSQLLLFPYGHTCQHTYNHDDLQAIGDAAARSLAQRYGTDYTVGNIYDAIYPASGGSMDWAYDTLDIPIAYTYELRPRDGWNGFQLPANQIIPTGEETVDSVVTILKESRRLGYFNTSD.

The Peptidase M14 domain occupies 1–294 (QYHTLPEIYS…DSVVTILKES (294 aa)). Residues H58 and E61 each contribute to the Zn(2+) site. C125 and C148 are disulfide-bonded. Position 184 (H184) interacts with Zn(2+). Catalysis depends on E259, which acts as the Proton donor/acceptor.

Belongs to the peptidase M14 family. Zn(2+) is required as a cofactor. As to expression, gut specific.

It is found in the secreted. In terms of biological role, involved in the digestion of the blood meal. The protein is Zinc carboxypeptidase of Simulium vittatum (Striped black fly).